The primary structure comprises 345 residues: N-acetyl-gamma-glutamyl-phosphate reductase (345 aa).

Residue C149 is part of the active site.

Belongs to the NAGSA dehydrogenase family. Type 1 subfamily.

The protein localises to the cytoplasm. It carries out the reaction N-acetyl-L-glutamate 5-semialdehyde + phosphate + NADP(+) = N-acetyl-L-glutamyl 5-phosphate + NADPH + H(+). The protein operates within amino-acid biosynthesis; L-arginine biosynthesis; N(2)-acetyl-L-ornithine from L-glutamate: step 3/4. Its function is as follows. Catalyzes the NADPH-dependent reduction of N-acetyl-5-glutamyl phosphate to yield N-acetyl-L-glutamate 5-semialdehyde. The sequence is that of N-acetyl-gamma-glutamyl-phosphate reductase from Bacillus cytotoxicus (strain DSM 22905 / CIP 110041 / 391-98 / NVH 391-98).